Reading from the N-terminus, the 276-residue chain is Large ribosomal subunit protein uL2 (276 aa).

The disordered stretch occupies residues 208–276 (KAGRNRHRGI…KLIISRRKGK (69 aa)). Positions 230–240 (DHPHGGGEGKK) are enriched in basic and acidic residues. Positions 255-276 (KGAKTRRKKASDKLIISRRKGK) are enriched in basic residues.

It belongs to the universal ribosomal protein uL2 family. Part of the 50S ribosomal subunit. Forms a bridge to the 30S subunit in the 70S ribosome.

Functionally, one of the primary rRNA binding proteins. Required for association of the 30S and 50S subunits to form the 70S ribosome, for tRNA binding and peptide bond formation. It has been suggested to have peptidyltransferase activity; this is somewhat controversial. Makes several contacts with the 16S rRNA in the 70S ribosome. The sequence is that of Large ribosomal subunit protein uL2 from Campylobacter lari (strain RM2100 / D67 / ATCC BAA-1060).